The primary structure comprises 296 residues: Nucleotide-binding protein stu0831 (296 aa).

13–20 (GMSGAGKT) lines the ATP pocket. Residue 63–66 (DMRS) participates in GTP binding.

The protein belongs to the RapZ-like family.

In terms of biological role, displays ATPase and GTPase activities. This is Nucleotide-binding protein stu0831 from Streptococcus thermophilus (strain ATCC BAA-250 / LMG 18311).